Here is a 164-residue protein sequence, read N- to C-terminus: MVARSEEVEIVEDTAAKCLMLLSRVGECGGGGEKRVFRCKTCLKEFSSFQALGGHRASHKKLINSSDPSLLGSLSNKKTKTATSHPCPICGVEFPMGQALGGHMRRHRSEKASPGTLVTRSFLPETTTVTTLKKSSSGKRVACLDLDSMESLVNWKLELGRTIS.

C2H2-type zinc fingers lie at residues 37-59 and 85-107; these read FRCK…RASH and HPCP…MRRH.

It is found in the nucleus. Probable transcription factor that may be involved in stress responses. This Arabidopsis thaliana (Mouse-ear cress) protein is Zinc finger protein ZAT8 (ZAT8).